The primary structure comprises 272 residues: Hematopoietically-expressed homeobox protein hhex (272 aa).

The homeobox DNA-binding region spans 137-196 (RKGGQVRFSNDQTIELEKKFETQKYLSPPERKRLAKMLQLSERQVKTWFQNRRAKWRRLK). The tract at residues 222–272 (CLSAEQKSRESSLDDPTSSPTSQGNLDSEVSDDSDQEVDIEGDKGYYNCAH) is disordered. The segment covering 250 to 261 (EVSDDSDQEVDI) has biased composition (acidic residues).

First expressed in the dorsal endomesoderm of the gastrula stage embryo. The dorsal endomesoderm contributes to forming the embryonic liver, and expression continues in the liver throughout development. Also expressed in precursors of the developing thyroid gland, and beginning at the tailbud stage, expressed in the ventral region of the head. Also transiently expressed in the endothelial layer of developing vascular tissues of the embryo, beginning at the tailbud stages.

Its subcellular location is the nucleus. In terms of biological role, recognizes the DNA sequence 5'-ATTAA-3'. Transcriptional repressor. Regulates the differentiation of both endothelial and blood cells. Probably plays a role in the proliferation of vascular endothelial cells during blood vessel development. Establishes anterior identity at two levels; acts early to enhance canonical wnt-signaling by repressing expression of tle4, and acts later to inhibit nodal-signaling by directly targeting nodal/nr1 and nodal2/nr2. May play a role in liver development. Induces heart development. This Xenopus laevis (African clawed frog) protein is Hematopoietically-expressed homeobox protein hhex.